Consider the following 342-residue polypeptide: Thioredoxin reductase 2, mitochondrial (342 aa).

The transit peptide at 1 to 23 directs the protein to the mitochondrion; that stretch reads MIKHIVSPFRTNFVGISKSVLSR. Residues 34–37, 56–68, 63–64, Q68, N77, V110, C168, D311, 311–320, and 318–320 contribute to the FAD site; these read SGPA, EGMMANGIAAGGQ, IA, DVQDSRYRQA, and RQA. A disulfide bond links C165 and C168.

This sequence belongs to the class-II pyridine nucleotide-disulfide oxidoreductase family. As to quaternary structure, homodimer. FAD is required as a cofactor.

Its subcellular location is the mitochondrion. The enzyme catalyses [thioredoxin]-dithiol + NADP(+) = [thioredoxin]-disulfide + NADPH + H(+). Functionally, acts on mitochondrial thioredoxin 3. Implicated in the defense against oxidative stress. The polypeptide is Thioredoxin reductase 2, mitochondrial (Saccharomyces cerevisiae (strain ATCC 204508 / S288c) (Baker's yeast)).